Reading from the N-terminus, the 348-residue chain is Alcohol dehydrogenase 1 (348 aa).

Zn(2+)-binding residues include C44, H67, C98, C101, C104, C112, and C154. NAD(+) contacts are provided by residues G178–G184, D202, K207, V269–L271, and R341.

The protein belongs to the zinc-containing alcohol dehydrogenase family. In terms of assembly, homotetramer. It depends on Zn(2+) as a cofactor.

Its subcellular location is the cytoplasm. It catalyses the reaction a primary alcohol + NAD(+) = an aldehyde + NADH + H(+). It carries out the reaction a secondary alcohol + NAD(+) = a ketone + NADH + H(+). Functionally, converts ethanol to acetaldehyde and plays a major role in xylose fermentation. This Scheffersomyces stipitis (strain ATCC 58785 / CBS 6054 / NBRC 10063 / NRRL Y-11545) (Yeast) protein is Alcohol dehydrogenase 1 (ADH1).